The chain runs to 312 residues: MRLVFAGTPEFARIALDALLAAGHDVPLVLTQPDRPAGRGLKLTPSPVKQAALAAGIEVAQPRSLRLDGRYPDEAAAARAQLERVAPDVMVVAAYGLILPQWTLDLPRLGCLNIHASLLPRWRGAAPIQRAIEAGDAETGVTIMQMDAGLDTGDMLLERAVPIGAQQTAAQLHDELALAGGQAIVDALAALGQGGLAPRRQPDAGVTYAAKLDKAEAALDCSLPAAVLARRVRAFNPVPGATIRLPGLDDPVKVWRAQALEQAAGGPPGAVLRADAQGIDIATGQGVLRLLELQKAGGKRQPVDVFVRGWQP.

Position 117–120 (117–120 (SLLP)) interacts with (6S)-5,6,7,8-tetrahydrofolate.

It belongs to the Fmt family.

It catalyses the reaction L-methionyl-tRNA(fMet) + (6R)-10-formyltetrahydrofolate = N-formyl-L-methionyl-tRNA(fMet) + (6S)-5,6,7,8-tetrahydrofolate + H(+). Its function is as follows. Attaches a formyl group to the free amino group of methionyl-tRNA(fMet). The formyl group appears to play a dual role in the initiator identity of N-formylmethionyl-tRNA by promoting its recognition by IF2 and preventing the misappropriation of this tRNA by the elongation apparatus. This is Methionyl-tRNA formyltransferase from Bordetella bronchiseptica (strain ATCC BAA-588 / NCTC 13252 / RB50) (Alcaligenes bronchisepticus).